We begin with the raw amino-acid sequence, 125 residues long: Large ribosomal subunit protein bL12 (125 aa).

This sequence belongs to the bacterial ribosomal protein bL12 family. As to quaternary structure, homodimer. Part of the ribosomal stalk of the 50S ribosomal subunit. Forms a multimeric L10(L12)X complex, where L10 forms an elongated spine to which 2 to 4 L12 dimers bind in a sequential fashion. Binds GTP-bound translation factors.

Forms part of the ribosomal stalk which helps the ribosome interact with GTP-bound translation factors. Is thus essential for accurate translation. The chain is Large ribosomal subunit protein bL12 from Erythrobacter litoralis (strain HTCC2594).